Reading from the N-terminus, the 212-residue chain is Pyridoxine/pyridoxamine 5'-phosphate oxidase (212 aa).

Substrate-binding positions include 8 to 11 (RREY) and Lys-66. FMN contacts are provided by residues 61 to 66 (RIVLLK), 76 to 77 (FT), Arg-82, Lys-83, and Gln-105. 3 residues coordinate substrate: Tyr-123, Arg-127, and Ser-131. Residues 140-141 (QS) and Trp-185 contribute to the FMN site. 191–193 (RLH) is a substrate binding site. Arg-195 contributes to the FMN binding site.

This sequence belongs to the pyridoxamine 5'-phosphate oxidase family. As to quaternary structure, homodimer. Requires FMN as cofactor.

The catalysed reaction is pyridoxamine 5'-phosphate + O2 + H2O = pyridoxal 5'-phosphate + H2O2 + NH4(+). The enzyme catalyses pyridoxine 5'-phosphate + O2 = pyridoxal 5'-phosphate + H2O2. It participates in cofactor metabolism; pyridoxal 5'-phosphate salvage; pyridoxal 5'-phosphate from pyridoxamine 5'-phosphate: step 1/1. The protein operates within cofactor metabolism; pyridoxal 5'-phosphate salvage; pyridoxal 5'-phosphate from pyridoxine 5'-phosphate: step 1/1. Functionally, catalyzes the oxidation of either pyridoxine 5'-phosphate (PNP) or pyridoxamine 5'-phosphate (PMP) into pyridoxal 5'-phosphate (PLP). In Shewanella baltica (strain OS155 / ATCC BAA-1091), this protein is Pyridoxine/pyridoxamine 5'-phosphate oxidase.